Consider the following 576-residue polypeptide: Nuclear/nucleolar GTPase 2 (576 aa).

Disordered regions lie at residues 1–61 (MVKK…SNEY) and 166–186 (QDAFEEKNGAGPSGEGGEEED). Residues 16 to 34 (HSLDANRADGKKKTTETRS) show a composition bias toward basic and acidic residues. Residues 42–52 (KMYKTRPKRNA) are compositionally biased toward basic residues. Positions 206-367 (WGELYKVIDS…LIDCPGVVYQ (162 aa)) constitute a CP-type G domain. Positions 224-228 (DARDP) match the DARXP motif motif. Positions 254–257 (NKCD) are G4. Position 254-257 (254-257 (NKCD)) interacts with GTP. The interval 283-285 (SVN) is G5. The G1 stretch occupies residues 316–323 (GYPNVGKS). 319–324 (NVGKSS) contacts GTP. A G2 region spans residues 342 to 346 (GETKV). The tract at residues 360–363 (DCPG) is G3. Glycine 363 is a binding site for GTP. Positions 502 to 576 (TQQQKDVPVQ…DEEDESDSAE (75 aa)) are disordered. The segment covering 509-530 (PVQRDFYDEKDLKDDKKAKEST) has biased composition (basic and acidic residues). A compositionally biased stretch (acidic residues) spans 531-576 (ETDAENGTDAEEDEDAVSEDGVESDSDADEDAVSENDEEDESDSAE).

This sequence belongs to the TRAFAC class YlqF/YawG GTPase family. RsgA subfamily. Interacts with the 60S ribosomal proteins RPL10AA, RPL10AB and RPL10AC. Ubiquitous, with higher levels in meristematic regions.

Its subcellular location is the nucleus. The protein resides in the nucleolus. The GTPase activity is stimulated in the presence of the 60S ribosomal subunit. Functionally, GTPase involved in pre-60S ribosomal subunit maturation. In Arabidopsis thaliana (Mouse-ear cress), this protein is Nuclear/nucleolar GTPase 2.